Here is a 110-residue protein sequence, read N- to C-terminus: Keratin, type I cytoskeletal 19 (110 aa).

The head stretch occupies residues 1 to 8; that stretch reads FGSGGVFR. Serine 3 carries the post-translational modification Phosphoserine. The IF rod domain occupies 7–110; sequence FRITMQNLND…KLEQEIATYR (104 aa). Arginine 8 bears the Omega-N-methylarginine mark. The coil 1A stretch occupies residues 9 to 42; it reads ITMQNLNDRLASYLDKVRALEQANGELEVKIRDW. The tract at residues 43–45 is linker 1; that stretch reads YQK. The segment at 46-83 is coil 1B; it reads IVLQIDNARTKFETEQALRVLDELTLARKNHEEEISAL. Residues 85 to 110 form a coil 2 region; it reads ADTERQNQEYQQLMDIKLEQEIATYR. The necessary for interaction with PNN stretch occupies residues 85 to 110; that stretch reads ADTERQNQEYQQLMDIKLEQEIATYR.

This sequence belongs to the intermediate filament family. As to quaternary structure, heterotetramer of two type I and two type II keratins. Interacts with PNN and the actin-binding domain of DMD.

Involved in the organization of myofibers. Together with KRT8, helps to link the contractile apparatus to dystrophin at the costameres of striated muscle. In Mesocricetus auratus (Golden hamster), this protein is Keratin, type I cytoskeletal 19.